Consider the following 291-residue polypeptide: Ribosomal RNA small subunit methyltransferase A (291 aa).

Asn33, Val35, Gly60, Glu81, Asp111, and Asn129 together coordinate S-adenosyl-L-methionine.

The protein belongs to the class I-like SAM-binding methyltransferase superfamily. rRNA adenine N(6)-methyltransferase family. RsmA subfamily.

The protein resides in the cytoplasm. The catalysed reaction is adenosine(1518)/adenosine(1519) in 16S rRNA + 4 S-adenosyl-L-methionine = N(6)-dimethyladenosine(1518)/N(6)-dimethyladenosine(1519) in 16S rRNA + 4 S-adenosyl-L-homocysteine + 4 H(+). Specifically dimethylates two adjacent adenosines (A1518 and A1519) in the loop of a conserved hairpin near the 3'-end of 16S rRNA in the 30S particle. May play a critical role in biogenesis of 30S subunits. This Streptomyces griseus subsp. griseus (strain JCM 4626 / CBS 651.72 / NBRC 13350 / KCC S-0626 / ISP 5235) protein is Ribosomal RNA small subunit methyltransferase A.